The sequence spans 367 residues: Chorismate synthase (367 aa).

R48 contributes to the NADP(+) binding site. FMN is bound by residues 125–127 (RSS), G283, 298–302 (KPTPS), and R324.

Belongs to the chorismate synthase family. As to quaternary structure, homotetramer. It depends on FMNH2 as a cofactor.

It catalyses the reaction 5-O-(1-carboxyvinyl)-3-phosphoshikimate = chorismate + phosphate. It participates in metabolic intermediate biosynthesis; chorismate biosynthesis; chorismate from D-erythrose 4-phosphate and phosphoenolpyruvate: step 7/7. Functionally, catalyzes the anti-1,4-elimination of the C-3 phosphate and the C-6 proR hydrogen from 5-enolpyruvylshikimate-3-phosphate (EPSP) to yield chorismate, which is the branch point compound that serves as the starting substrate for the three terminal pathways of aromatic amino acid biosynthesis. This reaction introduces a second double bond into the aromatic ring system. The protein is Chorismate synthase of Agathobacter rectalis (strain ATCC 33656 / DSM 3377 / JCM 17463 / KCTC 5835 / VPI 0990) (Eubacterium rectale).